We begin with the raw amino-acid sequence, 415 residues long: Serine hydroxymethyltransferase (415 aa).

Residues L120 and 124 to 126 each bind (6S)-5,6,7,8-tetrahydrofolate; that span reads GHL. The residue at position 229 (K229) is an N6-(pyridoxal phosphate)lysine.

This sequence belongs to the SHMT family. Homodimer. Pyridoxal 5'-phosphate serves as cofactor.

The protein resides in the cytoplasm. The enzyme catalyses (6R)-5,10-methylene-5,6,7,8-tetrahydrofolate + glycine + H2O = (6S)-5,6,7,8-tetrahydrofolate + L-serine. The protein operates within one-carbon metabolism; tetrahydrofolate interconversion. It participates in amino-acid biosynthesis; glycine biosynthesis; glycine from L-serine: step 1/1. Catalyzes the reversible interconversion of serine and glycine with tetrahydrofolate (THF) serving as the one-carbon carrier. This reaction serves as the major source of one-carbon groups required for the biosynthesis of purines, thymidylate, methionine, and other important biomolecules. Also exhibits THF-independent aldolase activity toward beta-hydroxyamino acids, producing glycine and aldehydes, via a retro-aldol mechanism. This Pelotomaculum thermopropionicum (strain DSM 13744 / JCM 10971 / SI) protein is Serine hydroxymethyltransferase.